The following is an 88-amino-acid chain: Defensin-like protein 267 (88 aa).

Positions 1–23 are cleaved as a signal peptide; it reads MMLSKVVLLALLLSLSCLWVAKA. Disulfide bonds link Cys45–Cys63, Cys51–Cys68, and Cys55–Cys70.

Belongs to the DEFL family.

The protein resides in the secreted. The sequence is that of Defensin-like protein 267 from Arabidopsis thaliana (Mouse-ear cress).